The primary structure comprises 378 residues: MKILVDENMPYARDLFSRLGEVIAVPGRPIPVAQLADADALMVRSVTKVNESLLAGKPIKFVGTATAGTDHVDEAWLKQAGIGFSAAPGCNAIAVVEYVFSSLLMLAERDGFSLHERTVGIVGVGNVGRRLQARLEALGIKTLLCDPPRADCGDEGDFRSLDELVQRADILTFHTPLFKDGPYKTLHLADEKLIRSLKPGAILINACRGAVVDNTALLTCLNEGQKLSVVLDVWEGEPELNVELLTKVDIGTPHIAGYTLEGKARGTTQVFEAYSKFIGHEQHVALDTLLPAPEFGRITLHGPLDQPTLKRLVHLVYDVRRDDAPLRKVAGIPGEFDKLRKNYLERREWSSLYVICDDASAASLLCKLGFNAVHHPAR.

2 residues coordinate substrate: Ser45 and Thr66. Residues Asp146 and Thr175 each coordinate NAD(+). Arg208 is a catalytic residue. Asp232 is a binding site for NAD(+). Glu237 is a catalytic residue. Residue His254 is the Proton donor of the active site. Position 257 (Gly257) interacts with NAD(+). Tyr258 contributes to the substrate binding site.

The protein belongs to the D-isomer specific 2-hydroxyacid dehydrogenase family. PdxB subfamily. In terms of assembly, homodimer.

Its subcellular location is the cytoplasm. The catalysed reaction is 4-phospho-D-erythronate + NAD(+) = (R)-3-hydroxy-2-oxo-4-phosphooxybutanoate + NADH + H(+). It functions in the pathway cofactor biosynthesis; pyridoxine 5'-phosphate biosynthesis; pyridoxine 5'-phosphate from D-erythrose 4-phosphate: step 2/5. In terms of biological role, catalyzes the oxidation of erythronate-4-phosphate to 3-hydroxy-2-oxo-4-phosphonooxybutanoate. The protein is Erythronate-4-phosphate dehydrogenase of Escherichia coli O157:H7.